The following is a 445-amino-acid chain: Rab GDP dissociation inhibitor beta (445 aa).

Residue Met1 is modified to N-acetylmethionine. Position 112 is an N6-acetyllysine (Lys112). Position 130 is a phosphoserine (Ser130). Residue Lys269 is modified to N6-acetyllysine. The residue at position 382 (Ser382) is a Phosphoserine.

This sequence belongs to the Rab GDI family. Interacts with RHOH. Interacts with the GDP-bound inactive forms of RAB3A, RAB3B, RAB3C, RAB5A, RAB5B, RAB5C, RAB8A, RAB8B, RAB10, RAB12, RAB35, and RAB43; binds RAB3D to a lesser extent. Interacts with DZIP1; this interaction negatively regulates the interaction of GDI2 with GDP-bound RAB8A.

It is found in the cytoplasm. Its subcellular location is the membrane. The protein resides in the golgi apparatus. The protein localises to the trans-Golgi network. GDP-dissociation inhibitor preventing the GDP to GTP exchange of most Rab proteins. By keeping these small GTPases in their inactive GDP-bound form regulates intracellular membrane trafficking. Negatively regulates protein transport to the cilium and ciliogenesis through the inhibition of RAB8A. This Sus scrofa (Pig) protein is Rab GDP dissociation inhibitor beta (GDI2).